A 156-amino-acid chain; its full sequence is ATP synthase subunit b (156 aa).

A helical membrane pass occupies residues 7–29 (LIGQLIAFALFTWFCVKFVWPPI).

It belongs to the ATPase B chain family. In terms of assembly, F-type ATPases have 2 components, F(1) - the catalytic core - and F(0) - the membrane proton channel. F(1) has five subunits: alpha(3), beta(3), gamma(1), delta(1), epsilon(1). F(0) has three main subunits: a(1), b(2) and c(10-14). The alpha and beta chains form an alternating ring which encloses part of the gamma chain. F(1) is attached to F(0) by a central stalk formed by the gamma and epsilon chains, while a peripheral stalk is formed by the delta and b chains.

It localises to the cell inner membrane. In terms of biological role, f(1)F(0) ATP synthase produces ATP from ADP in the presence of a proton or sodium gradient. F-type ATPases consist of two structural domains, F(1) containing the extramembraneous catalytic core and F(0) containing the membrane proton channel, linked together by a central stalk and a peripheral stalk. During catalysis, ATP synthesis in the catalytic domain of F(1) is coupled via a rotary mechanism of the central stalk subunits to proton translocation. Its function is as follows. Component of the F(0) channel, it forms part of the peripheral stalk, linking F(1) to F(0). The protein is ATP synthase subunit b of Mannheimia succiniciproducens (strain KCTC 0769BP / MBEL55E).